Reading from the N-terminus, the 236-residue chain is Biosynthetic peptidoglycan transglycosylase (236 aa).

The helical transmembrane segment at 12 to 31 threads the bilayer; that stretch reads ALLWFVAGSIVLVLVFRWVP.

This sequence belongs to the glycosyltransferase 51 family.

The protein localises to the cell inner membrane. The enzyme catalyses [GlcNAc-(1-&gt;4)-Mur2Ac(oyl-L-Ala-gamma-D-Glu-L-Lys-D-Ala-D-Ala)](n)-di-trans,octa-cis-undecaprenyl diphosphate + beta-D-GlcNAc-(1-&gt;4)-Mur2Ac(oyl-L-Ala-gamma-D-Glu-L-Lys-D-Ala-D-Ala)-di-trans,octa-cis-undecaprenyl diphosphate = [GlcNAc-(1-&gt;4)-Mur2Ac(oyl-L-Ala-gamma-D-Glu-L-Lys-D-Ala-D-Ala)](n+1)-di-trans,octa-cis-undecaprenyl diphosphate + di-trans,octa-cis-undecaprenyl diphosphate + H(+). The protein operates within cell wall biogenesis; peptidoglycan biosynthesis. In terms of biological role, peptidoglycan polymerase that catalyzes glycan chain elongation from lipid-linked precursors. In Pseudomonas putida (strain ATCC 700007 / DSM 6899 / JCM 31910 / BCRC 17059 / LMG 24140 / F1), this protein is Biosynthetic peptidoglycan transglycosylase.